Reading from the N-terminus, the 264-residue chain is Thymidylate synthase (264 aa).

Arg-21 is a binding site for dUMP. His-51 serves as a coordination point for (6R)-5,10-methylene-5,6,7,8-tetrahydrofolate. 126–127 is a dUMP binding site; sequence RR. The active-site Nucleophile is Cys-146. DUMP-binding positions include 166–169, Asn-177, and 207–209; these read RSAD and HLY. Asp-169 lines the (6R)-5,10-methylene-5,6,7,8-tetrahydrofolate pocket. Ala-263 is a binding site for (6R)-5,10-methylene-5,6,7,8-tetrahydrofolate.

This sequence belongs to the thymidylate synthase family. Bacterial-type ThyA subfamily. In terms of assembly, homodimer.

Its subcellular location is the cytoplasm. It catalyses the reaction dUMP + (6R)-5,10-methylene-5,6,7,8-tetrahydrofolate = 7,8-dihydrofolate + dTMP. It participates in pyrimidine metabolism; dTTP biosynthesis. Its function is as follows. Catalyzes the reductive methylation of 2'-deoxyuridine-5'-monophosphate (dUMP) to 2'-deoxythymidine-5'-monophosphate (dTMP) while utilizing 5,10-methylenetetrahydrofolate (mTHF) as the methyl donor and reductant in the reaction, yielding dihydrofolate (DHF) as a by-product. This enzymatic reaction provides an intracellular de novo source of dTMP, an essential precursor for DNA biosynthesis. The chain is Thymidylate synthase from Nitrosomonas europaea (strain ATCC 19718 / CIP 103999 / KCTC 2705 / NBRC 14298).